The sequence spans 136 residues: Large ribosomal subunit protein uL16 (136 aa).

Belongs to the universal ribosomal protein uL16 family. In terms of assembly, part of the 50S ribosomal subunit.

Its function is as follows. Binds 23S rRNA and is also seen to make contacts with the A and possibly P site tRNAs. The chain is Large ribosomal subunit protein uL16 from Bradyrhizobium diazoefficiens (strain JCM 10833 / BCRC 13528 / IAM 13628 / NBRC 14792 / USDA 110).